The primary structure comprises 327 residues: Eukaryotic translation initiation factor 3 subunit I (327 aa).

WD repeat units lie at residues 8-47, 50-89, 147-186, 189-228, and 286-327; these read GHQRAITQIKYNREGDLIFSSAKDSKPSVWYSLNGERLGT, GHIGAVWCVDVDWTTTRLITGAGDMNTFLWDVETGTALGK, EQQSKITSMLWGALDETVITGHENGSLRIWDLRAVKELNS, DHTASITDMQMSSDGTMFVSSSKDCSAKLFDSDSLMCLKT, and GHFG…HTFE.

It belongs to the eIF-3 subunit I family. As to quaternary structure, component of the eukaryotic translation initiation factor 3 (eIF-3) complex.

Its subcellular location is the cytoplasm. In terms of biological role, component of the eukaryotic translation initiation factor 3 (eIF-3) complex, which is involved in protein synthesis of a specialized repertoire of mRNAs and, together with other initiation factors, stimulates binding of mRNA and methionyl-tRNAi to the 40S ribosome. The eIF-3 complex specifically targets and initiates translation of a subset of mRNAs involved in cell proliferation. The sequence is that of Eukaryotic translation initiation factor 3 subunit I from Anopheles gambiae (African malaria mosquito).